The sequence spans 463 residues: Soluble pyridine nucleotide transhydrogenase (463 aa).

35–44 (EKQQAVGGNC) serves as a coordination point for FAD.

This sequence belongs to the class-I pyridine nucleotide-disulfide oxidoreductase family. It depends on FAD as a cofactor.

It localises to the cytoplasm. The catalysed reaction is NAD(+) + NADPH = NADH + NADP(+). Functionally, conversion of NADPH, generated by peripheral catabolic pathways, to NADH, which can enter the respiratory chain for energy generation. The polypeptide is Soluble pyridine nucleotide transhydrogenase (Chromohalobacter salexigens (strain ATCC BAA-138 / DSM 3043 / CIP 106854 / NCIMB 13768 / 1H11)).